Here is a 156-residue protein sequence, read N- to C-terminus: Small ribosomal subunit protein uS7 (156 aa).

Belongs to the universal ribosomal protein uS7 family. As to quaternary structure, part of the 30S ribosomal subunit. Contacts proteins S9 and S11.

One of the primary rRNA binding proteins, it binds directly to 16S rRNA where it nucleates assembly of the head domain of the 30S subunit. Is located at the subunit interface close to the decoding center, probably blocks exit of the E-site tRNA. This chain is Small ribosomal subunit protein uS7, found in Tropheryma whipplei (strain TW08/27) (Whipple's bacillus).